The sequence spans 146 residues: Suppressor APC domain-containing protein 1 (146 aa).

The tract at residues 121 to 146 (HRKGVTQSTGEVVSQAPPGPKGPTLV) is disordered. A compositionally biased stretch (pro residues) spans 137–146 (PPGPKGPTLV).

This is Suppressor APC domain-containing protein 1 (Sapcd1) from Mus musculus (Mouse).